Reading from the N-terminus, the 1264-residue chain is BRCA2-interacting transcriptional repressor EMSY (1264 aa).

The segment at Met-1–Pro-442 is interaction with BRCA2. The ENT domain occupies Cys-16 to Val-114. Residues Pro-118–Pro-122 are interaction with ZMYND11. The interval Pro-145–Val-179 is disordered. The residue at position 171 (Thr-171) is a Phosphothreonine. Phosphoserine occurs at positions 173 and 177. Residues Ser-192 and Ser-200 are each glycosylated (O-linked (GlcNAc) serine). Ser-202 is modified (phosphoserine). Thr-235 is a glycosylation site (O-linked (GlcNAc) threonine). Positions Phe-364–Pro-406 are enriched in low complexity. The interval Phe-364–Gly-407 is disordered. O-linked (GlcNAc) threonine glycans are attached at residues Thr-465 and Thr-470. The O-linked (GlcNAc) serine glycan is linked to Ser-521. Residues Ser-660–Gln-671 show a composition bias toward polar residues. The segment at Ser-660–Val-700 is disordered. Positions Thr-681 to Gln-698 are enriched in low complexity. Ser-782 and Ser-785 each carry phosphoserine. Thr-1069 is a glycosylation site (O-linked (GlcNAc) threonine). At Ser-1085 the chain carries Phosphoserine. Residues Gln-1232–Ser-1264 are disordered. Positions Leu-1233–Thr-1252 are enriched in acidic residues. Polar residues predominate over residues Pro-1254 to Ser-1264.

In terms of assembly, homodimer. Interacts with the transactivation domain of BRCA2. Interacts with CBX1 (via chromoshadow domain). Interacts with ZMYND11. Does not interact with CBX3 or CBX5. Component of a nuclear receptor-mediated transcription complex composed of at least ZNF335, CCAR2 and EMSY; the complex stimulates the transcription of nuclear receptor target genes such as SOX9 and HOXA1. Within the complex interacts with CCAR2 and ZNF335. Components of this complex may associate with components of a histone methylation complex to form a complex at least composed of ZNF335, HCFC1, CCAR2, EMSY, MKI67, RBBP5, ASH2L and WDR5. Within this complex, interacts with ASH2L and RBBP5.

The protein localises to the nucleus. Functionally, regulator which is able to repress transcription, possibly via its interaction with a multiprotein chromatin remodeling complex that modifies the chromatin. Its interaction with BRCA2 suggests that it may play a central role in the DNA repair function of BRCA2. Mediates ligand-dependent transcriptional activation by nuclear hormone receptors. The polypeptide is BRCA2-interacting transcriptional repressor EMSY (Mus musculus (Mouse)).